The sequence spans 553 residues: Dihydroxy-acid dehydratase (553 aa).

Asp78 provides a ligand contact to Mg(2+). Position 119 (Cys119) interacts with [2Fe-2S] cluster. Mg(2+) contacts are provided by Asp120 and Lys121. Lys121 carries the post-translational modification N6-carboxylysine. Cys193 is a binding site for [2Fe-2S] cluster. Residue Glu441 participates in Mg(2+) binding. Ser467 serves as the catalytic Proton acceptor.

The protein belongs to the IlvD/Edd family. In terms of assembly, homodimer. It depends on [2Fe-2S] cluster as a cofactor. Requires Mg(2+) as cofactor.

It catalyses the reaction (2R)-2,3-dihydroxy-3-methylbutanoate = 3-methyl-2-oxobutanoate + H2O. The enzyme catalyses (2R,3R)-2,3-dihydroxy-3-methylpentanoate = (S)-3-methyl-2-oxopentanoate + H2O. It functions in the pathway amino-acid biosynthesis; L-isoleucine biosynthesis; L-isoleucine from 2-oxobutanoate: step 3/4. The protein operates within amino-acid biosynthesis; L-valine biosynthesis; L-valine from pyruvate: step 3/4. Functions in the biosynthesis of branched-chain amino acids. Catalyzes the dehydration of (2R,3R)-2,3-dihydroxy-3-methylpentanoate (2,3-dihydroxy-3-methylvalerate) into 2-oxo-3-methylpentanoate (2-oxo-3-methylvalerate) and of (2R)-2,3-dihydroxy-3-methylbutanoate (2,3-dihydroxyisovalerate) into 2-oxo-3-methylbutanoate (2-oxoisovalerate), the penultimate precursor to L-isoleucine and L-valine, respectively. In Geotalea daltonii (strain DSM 22248 / JCM 15807 / FRC-32) (Geobacter daltonii), this protein is Dihydroxy-acid dehydratase.